Here is a 433-residue protein sequence, read N- to C-terminus: 3-phosphoshikimate 1-carboxyvinyltransferase (433 aa).

The 3-phosphoshikimate site is built by Lys22, Ser23, and Arg27. Residue Lys22 coordinates phosphoenolpyruvate. Phosphoenolpyruvate contacts are provided by Gly96 and Arg130. 3-phosphoshikimate is bound by residues Ser176, Ser177, Gln178, Ser204, Asp319, Asn342, and Lys346. A phosphoenolpyruvate-binding site is contributed by Gln178. Asp319 (proton acceptor) is an active-site residue. Arg350, Arg394, and Lys419 together coordinate phosphoenolpyruvate.

The protein belongs to the EPSP synthase family. Monomer.

The protein resides in the cytoplasm. It catalyses the reaction 3-phosphoshikimate + phosphoenolpyruvate = 5-O-(1-carboxyvinyl)-3-phosphoshikimate + phosphate. It functions in the pathway metabolic intermediate biosynthesis; chorismate biosynthesis; chorismate from D-erythrose 4-phosphate and phosphoenolpyruvate: step 6/7. In terms of biological role, catalyzes the transfer of the enolpyruvyl moiety of phosphoenolpyruvate (PEP) to the 5-hydroxyl of shikimate-3-phosphate (S3P) to produce enolpyruvyl shikimate-3-phosphate and inorganic phosphate. This is 3-phosphoshikimate 1-carboxyvinyltransferase from Actinobacillus succinogenes (strain ATCC 55618 / DSM 22257 / CCUG 43843 / 130Z).